Here is a 356-residue protein sequence, read N- to C-terminus: 5-formaminoimidazole-4-carboxamide-1-(beta)-D-ribofuranosyl 5'-monophosphate synthetase 1 (356 aa).

Histidine 27 and serine 94 together coordinate 5-amino-1-(5-phospho-beta-D-ribosyl)imidazole-4-carboxamide. Residues 101 to 333 (TENFAEMAVP…YADLIQEDLS (233 aa)) enclose the ATP-grasp domain. Residues 145 to 196 (PRDI…TRYY) and glutamate 226 contribute to the ATP site. A 5-amino-1-(5-phospho-beta-D-ribosyl)imidazole-4-carboxamide-binding site is contributed by asparagine 255. Mg(2+) is bound by residues glutamate 293 and glutamate 306.

This sequence belongs to the phosphohexose mutase family. It depends on Mg(2+) as a cofactor. Mn(2+) serves as cofactor.

The enzyme catalyses 5-amino-1-(5-phospho-beta-D-ribosyl)imidazole-4-carboxamide + formate + ATP = 5-formamido-1-(5-phospho-D-ribosyl)imidazole-4-carboxamide + ADP + phosphate. Its pathway is purine metabolism; IMP biosynthesis via de novo pathway; 5-formamido-1-(5-phospho-D-ribosyl)imidazole-4-carboxamide from 5-amino-1-(5-phospho-D-ribosyl)imidazole-4-carboxamide (formate route): step 1/1. Its function is as follows. Catalyzes the ATP- and formate-dependent formylation of 5-aminoimidazole-4-carboxamide-1-beta-d-ribofuranosyl 5'-monophosphate (AICAR) to 5-formaminoimidazole-4-carboxamide-1-beta-d-ribofuranosyl 5'-monophosphate (FAICAR) in the absence of folates. In Methanosarcina mazei (strain ATCC BAA-159 / DSM 3647 / Goe1 / Go1 / JCM 11833 / OCM 88) (Methanosarcina frisia), this protein is 5-formaminoimidazole-4-carboxamide-1-(beta)-D-ribofuranosyl 5'-monophosphate synthetase 1.